Here is a 117-residue protein sequence, read N- to C-terminus: MDKKSARIRRATRARRKIKELGATRLVVHRTPRHIYAQVIAPNGSEVLVAASTLEKAVTEQLKYSGNKDAAAAVGKALAERALEKGISKVSFDRSGFQYHGRVQALADAAREAGLQF.

The protein belongs to the universal ribosomal protein uL18 family. Part of the 50S ribosomal subunit; part of the 5S rRNA/L5/L18/L25 subcomplex. Contacts the 5S and 23S rRNAs.

Its function is as follows. This is one of the proteins that bind and probably mediate the attachment of the 5S RNA into the large ribosomal subunit, where it forms part of the central protuberance. This chain is Large ribosomal subunit protein uL18, found in Serratia proteamaculans (strain 568).